Reading from the N-terminus, the 203-residue chain is Peroxiredoxin (203 aa).

The region spanning 3-156 (VVLGQKAPDF…IIRVIKALQF (154 aa)) is the Thioredoxin domain. The active-site Cysteine sulfenic acid (-SOH) intermediate is the C44. R119 is a substrate binding site.

Belongs to the peroxiredoxin family. Prx6 subfamily. Homodecamer. Pentamer of dimers that assemble into a ring structure.

It localises to the cytoplasm. The enzyme catalyses a hydroperoxide + [thioredoxin]-dithiol = an alcohol + [thioredoxin]-disulfide + H2O. Its function is as follows. Thiol-specific peroxidase that catalyzes the reduction of hydrogen peroxide and organic hydroperoxides to water and alcohols, respectively. Plays a role in cell protection against oxidative stress by detoxifying peroxides. This chain is Peroxiredoxin, found in Thermoplasma volcanium (strain ATCC 51530 / DSM 4299 / JCM 9571 / NBRC 15438 / GSS1).